A 403-amino-acid polypeptide reads, in one-letter code: Aminomethyltransferase, mitochondrial (403 aa).

A mitochondrion-targeting transit peptide spans 1 to 28; it reads MQRAVSVVARLGFRLQAFPPALCRPLSC. Substrate-binding residues include E232, R261, and Y399.

This sequence belongs to the GcvT family. As to quaternary structure, the glycine cleavage system is composed of four proteins: P, T, L and H.

The protein resides in the mitochondrion. The enzyme catalyses N(6)-[(R)-S(8)-aminomethyldihydrolipoyl]-L-lysyl-[protein] + (6S)-5,6,7,8-tetrahydrofolate = N(6)-[(R)-dihydrolipoyl]-L-lysyl-[protein] + (6R)-5,10-methylene-5,6,7,8-tetrahydrofolate + NH4(+). Functionally, the glycine cleavage system catalyzes the degradation of glycine. This Homo sapiens (Human) protein is Aminomethyltransferase, mitochondrial.